The chain runs to 145 residues: Hemoglobin subunit beta-3 (145 aa).

Residues 1 to 145 (MLTAEEKAAV…VANALAHRYH (145 aa)) form the Globin domain. Residue threonine 11 is modified to Phosphothreonine. Lysine 58 is subject to N6-acetyllysine. Histidine 62 serves as a coordination point for heme b. Lysine 81 is subject to N6-acetyllysine. Histidine 91 provides a ligand contact to heme b. Cysteine 92 is subject to S-nitrosocysteine.

Belongs to the globin family. As to quaternary structure, heterotetramer of two alpha chains and two beta chains. Red blood cells.

Its function is as follows. Involved in oxygen transport from the lung to the various peripheral tissues. The polypeptide is Hemoglobin subunit beta-3 (HBB) (Odocoileus virginianus virginianus (Virginia white-tailed deer)).